A 123-amino-acid chain; its full sequence is UPF0102 protein PSEEN4497 (123 aa).

Belongs to the UPF0102 family.

The chain is UPF0102 protein PSEEN4497 from Pseudomonas entomophila (strain L48).